The chain runs to 322 residues: Basic 30 kDa endochitinase (322 aa).

A signal peptide spans 1–22 (MRLSEFTTLFLLFSVLLLSASA). The Chitin-binding type-1 domain occupies 23–64 (EQCGSQAGGALCASGLCCSKFGWCGNTNEYCGPGNCQSQCPG). Intrachain disulfides connect C25–C40, C34–C46, C39–C53, and C58–C62. P66 and P68 each carry 4-hydroxyproline. Cystine bridges form between C93-C156, C168-C176, and C275-C307. E138 acts as the Proton donor in catalysis. A propeptide spans 316-322 (GLLVDIM) (removed in mature form).

Belongs to the glycosyl hydrolase 19 family. Chitinase class I subfamily. In terms of processing, the 4-hydroxyproline residues are not glycosylated in this plant vacuolar protein.

Its subcellular location is the vacuole. It is found in the secreted. The protein resides in the cell wall. It carries out the reaction Random endo-hydrolysis of N-acetyl-beta-D-glucosaminide (1-&gt;4)-beta-linkages in chitin and chitodextrins.. Defense against chitin-containing fungal pathogens. The polypeptide is Basic 30 kDa endochitinase (CHI9) (Solanum lycopersicum (Tomato)).